A 96-amino-acid polypeptide reads, in one-letter code: Invertase 7 (96 aa).

The N-terminal stretch at 1–19 (MLLQAFIFLLAGFAAKISA) is a signal peptide. N23 carries an N-linked (GlcNAc...) asparagine glycan. Substrate contacts are provided by residues 39 to 42 (WMND) and Q60. D42 is a catalytic residue. N-linked (GlcNAc...) asparagine glycans are attached at residues N64 and N76.

It belongs to the glycosyl hydrolase 32 family.

It catalyses the reaction Hydrolysis of terminal non-reducing beta-D-fructofuranoside residues in beta-D-fructofuranosides.. In Saccharomyces cerevisiae (Baker's yeast), this protein is Invertase 7 (SUC7).